Reading from the N-terminus, the 541-residue chain is Solute carrier family 2, facilitated glucose transporter member 10 (541 aa).

Residues 1–15 are Cytoplasmic-facing; the sequence is MGHSPPVLPLCASVS. Residues 16–36 traverse the membrane as a helical segment; the sequence is LLGGLTFGYELAVISGALLPL. At 37 to 48 the chain is on the extracellular side; sequence QLDFGLSCLEQE. A helical transmembrane segment spans residues 49–69; sequence FLVGSLLLGALLASLVGGFLI. At 70-77 the chain is on the cytoplasmic side; the sequence is DCYGRKQA. Residues 78 to 98 traverse the membrane as a helical segment; it reads ILGSNLVLLAGSLTLGLAGSL. Residues 99-106 are Extracellular-facing; the sequence is AWLVLGRA. A helical transmembrane segment spans residues 107–127; the sequence is VVGFAISLSSMACCIYVSELV. The Cytoplasmic segment spans residues 128-134; that stretch reads GPRQRGV. Residues 135–155 form a helical membrane-spanning segment; the sequence is LVSLYEAGITVGILLSYALNY. The Extracellular segment spans residues 156 to 166; sequence ALAGTPWGWRH. Residues 167 to 187 form a helical membrane-spanning segment; that stretch reads MFGWATAPAVLQSLSLLFLPA. Topologically, residues 188-233 are cytoplasmic; the sequence is GTDETATHKDLIPLQGGEAPKLGPGRPRYSFLDLFRARDNMRGRTT. A helical transmembrane segment spans residues 234–254; sequence VGLGLVLFQQLTGQPNVLCYA. Residue 242–243 coordinates D-glucose; that stretch reads QQ. Over 255–269 the chain is Extracellular; the sequence is STIFSSVGFHGGSSA. Residues 270-290 traverse the membrane as a helical segment; it reads VLASVGLGAVKVAATLTAMGL. The Cytoplasmic segment spans residues 291-298; it reads VDRAGRRA. A helical membrane pass occupies residues 299–319; sequence LLLAGCALMALSVSGIGLVSF. At 320 to 414 the chain is on the extracellular side; it reads AVPMDSGPSC…HALLRWTALL (95 aa). N-linked (GlcNAc...) asparagine glycosylation is present at Asn334. Positions 340-388 are disordered; the sequence is GLPGDSGLLQDSSLPPIPRTNEDQREPILSTAKKTKPHPRSGDPSAPPR. A helical membrane pass occupies residues 415 to 435; it reads CLMVFVSAFSFGFGPVTWLVL. Position 432 (Trp432) interacts with D-glucose. At 436 to 445 the chain is on the cytoplasmic side; sequence SEIYPVEIRG. Residues 446–466 traverse the membrane as a helical segment; sequence RAFAFCNSFNWAANLFISLSF. Residues 467–476 are Extracellular-facing; that stretch reads LDLIGTIGLS. The helical transmembrane segment at 477–497 threads the bilayer; that stretch reads WTFLLYGLTAVLGLGFIYLFV. Over 498–541 the chain is Cytoplasmic; it reads PETKGQSLAEIDQQFQKRRFTLSFGHRQNSTGIPYSRIEISAAS.

The protein belongs to the major facilitator superfamily. Sugar transporter (TC 2.A.1.1) family. Glucose transporter subfamily. Widely expressed; highest levels in liver and pancreas.

The protein resides in the endomembrane system. Its subcellular location is the cytoplasm. It is found in the perinuclear region. The enzyme catalyses D-glucose(out) = D-glucose(in). Its function is as follows. Facilitative glucose transporter required for the development of the cardiovascular system. This Homo sapiens (Human) protein is Solute carrier family 2, facilitated glucose transporter member 10.